Here is a 471-residue protein sequence, read N- to C-terminus: ATP synthase subunit beta (471 aa).

Position 152–159 (Gly152–Thr159) interacts with ATP.

This sequence belongs to the ATPase alpha/beta chains family. As to quaternary structure, F-type ATPases have 2 components, CF(1) - the catalytic core - and CF(0) - the membrane proton channel. CF(1) has five subunits: alpha(3), beta(3), gamma(1), delta(1), epsilon(1). CF(0) has three main subunits: a(1), b(2) and c(9-12). The alpha and beta chains form an alternating ring which encloses part of the gamma chain. CF(1) is attached to CF(0) by a central stalk formed by the gamma and epsilon chains, while a peripheral stalk is formed by the delta and b chains.

It is found in the cell membrane. The catalysed reaction is ATP + H2O + 4 H(+)(in) = ADP + phosphate + 5 H(+)(out). Functionally, produces ATP from ADP in the presence of a proton gradient across the membrane. The catalytic sites are hosted primarily by the beta subunits. The polypeptide is ATP synthase subunit beta (Herpetosiphon aurantiacus (Herpetosiphon giganteus)).